The following is a 257-amino-acid chain: Probable 6-phosphogluconolactonase (257 aa).

Belongs to the glucosamine/galactosamine-6-phosphate isomerase family. 6-phosphogluconolactonase subfamily.

It carries out the reaction 6-phospho-D-glucono-1,5-lactone + H2O = 6-phospho-D-gluconate + H(+). It participates in carbohydrate degradation; pentose phosphate pathway; D-ribulose 5-phosphate from D-glucose 6-phosphate (oxidative stage): step 2/3. Functionally, hydrolysis of 6-phosphogluconolactone to 6-phosphogluconate. The protein is Probable 6-phosphogluconolactonase of Schizosaccharomyces pombe (strain 972 / ATCC 24843) (Fission yeast).